We begin with the raw amino-acid sequence, 441 residues long: ATP-dependent RNA helicase sub2 (441 aa).

The segment covering 23 to 32 (TTAAPAANGD) has biased composition (low complexity). The interval 23–42 (TTAAPAANGDAAKKGDLTVS) is disordered. The Q motif motif lies at 58 to 86 (TGFRDFLLKGELLRAITDCGFEHPSEVQQ). The region spanning 89–264 (IPTAILNVDV…KKFMRNPLEV (176 aa)) is the Helicase ATP-binding domain. Position 102 to 109 (102 to 109 (AKSGLGKT)) interacts with ATP. Positions 211 to 214 (DECD) match the DECD box motif. The 146-residue stretch at 292–437 (KLNELLDSLE…EYPEGGVDSS (146 aa)) folds into the Helicase C-terminal domain.

It belongs to the DEAD box helicase family. DECD subfamily.

The protein localises to the nucleus. The enzyme catalyses ATP + H2O = ADP + phosphate + H(+). In terms of biological role, ATP-binding RNA helicase involved in transcription elongation and required for the export of mRNA out of the nucleus. SUB2 also plays a role in pre-mRNA splicing and spliceosome assembly. May be involved in rDNA and telomeric silencing, and maintenance of genome integrity. The chain is ATP-dependent RNA helicase sub2 (sub2) from Aspergillus oryzae (strain ATCC 42149 / RIB 40) (Yellow koji mold).